Reading from the N-terminus, the 667-residue chain is MSSSSFVWTVGSIALSSLITPTIADGSGSRYQLTEAWQGEKFLDHFKFFSGSDPTNGFVTYANQSYAESSGLIEVTESGSFYMGVDYKTKLSPNGPGRDSVRIESKEYYDEGLYIIDLQHMPGSVCGTWPAFWSVGPNWPYDGEIDIIEGVNKHEANEIVLHTSGSCSLSSENDMSGTMSSSECGESSGTIGCVVKGQTGTSGAPFNEKNGGVYAMEWTSSFVKIWYFARSEIPQSITEGNPDTTAFGTPMAHLQGTCDFGERFKSQKFILDTTFCGDWAGGVFGDSGCPVSDPSNPIQSCVNYVAENPAAFKEAYWEINYIKLFQTGTGHSTASIASQAETATAVVSKTVDSVPSVTSTPILETTAPAPETVSAEAPATSSAVPEPANPQTSVAGAETTAAPAPSPETTAAPASPSSDDSEGADAVSETTIYVTETTTICGASTQKGTIQTIGGGETEVSPASSTVESAATPAAPTPTSQEPVASLPGTTVNDGTPVPTDVSPETPAEETAGESGAPTPSAEQPEKPQPAATSIETGIVPPPVSNPAPTEQGTPEGASPVDATESRHVPDEPAPTSAAPIRSPSPSSWTISSSSRVALSSSFASTTSSASRTTSATKEATAPTETDSGASTGTNPESPVFTAGASKSVGISGLAGIVCGIAMAMLA.

Residues 1–24 (MSSSSFVWTVGSIALSSLITPTIA) form the signal peptide. Residues 25 to 288 (DGSGSRYQLT…WAGGVFGDSG (264 aa)) enclose the GH16 domain. A glycan (N-linked (GlcNAc...) asparagine) is linked at Asn63. Catalysis depends on Glu144, which acts as the Nucleophile. Glu149 serves as the catalytic Proton donor. Composition is skewed to polar residues over residues 354–363 (VPSVTSTPIL) and 379–394 (ATSS…QTSV). 2 disordered regions span residues 354–427 (VPSV…ADAV) and 448–646 (GTIQ…AGAS). Composition is skewed to low complexity over residues 395–427 (AGAE…ADAV), 448–483 (GTIQ…SQEP), and 574–622 (APTS…EATA). Over residues 623-637 (PTETDSGASTGTNPE) the composition is skewed to polar residues. Gly644 carries GPI-anchor amidated glycine lipidation. Residues 645–667 (ASKSVGISGLAGIVCGIAMAMLA) constitute a propeptide, removed in mature form.

Belongs to the glycosyl hydrolase 16 family.

Its subcellular location is the cell membrane. The catalysed reaction is Endohydrolysis of (1-&gt;3)- or (1-&gt;4)-linkages in beta-D-glucans when the glucose residue whose reducing group is involved in the linkage to be hydrolyzed is itself substituted at C-3.. Mixed-linked glucanase involved in the degradation of complex natural cellulosic substrates. This Aspergillus flavus (strain ATCC 200026 / FGSC A1120 / IAM 13836 / NRRL 3357 / JCM 12722 / SRRC 167) protein is Probable endo-1,3(4)-beta-glucanase AFLA_105200.